The primary structure comprises 1392 residues: DNA-directed RNA polymerase subunit beta' (1392 aa).

Residues Cys70, Cys72, Cys85, and Cys88 each coordinate Zn(2+). Mg(2+)-binding residues include Asp460, Asp462, and Asp464. Residues Cys810, Cys884, Cys891, and Cys894 each coordinate Zn(2+).

It belongs to the RNA polymerase beta' chain family. The RNAP catalytic core consists of 2 alpha, 1 beta, 1 beta' and 1 omega subunit. When a sigma factor is associated with the core the holoenzyme is formed, which can initiate transcription. Mg(2+) serves as cofactor. The cofactor is Zn(2+).

The catalysed reaction is RNA(n) + a ribonucleoside 5'-triphosphate = RNA(n+1) + diphosphate. Its function is as follows. DNA-dependent RNA polymerase catalyzes the transcription of DNA into RNA using the four ribonucleoside triphosphates as substrates. This Geobacter metallireducens (strain ATCC 53774 / DSM 7210 / GS-15) protein is DNA-directed RNA polymerase subunit beta'.